The sequence spans 328 residues: Ribosomal RNA large subunit methyltransferase F (328 aa).

The disordered stretch occupies residues 1–31; the sequence is MTDTRKPPRKKPQRPAKPAAPREKATLHPRN.

It belongs to the methyltransferase superfamily. METTL16/RlmF family.

Its subcellular location is the cytoplasm. The catalysed reaction is adenosine(1618) in 23S rRNA + S-adenosyl-L-methionine = N(6)-methyladenosine(1618) in 23S rRNA + S-adenosyl-L-homocysteine + H(+). Specifically methylates the adenine in position 1618 of 23S rRNA. This is Ribosomal RNA large subunit methyltransferase F from Pseudomonas syringae pv. syringae (strain B728a).